Here is an 832-residue protein sequence, read N- to C-terminus: Prickle-like protein 1-B (832 aa).

Positions 14–122 constitute a PET domain; that stretch reads FGCQRSSTSD…NIKMLSRAVM (109 aa). LIM zinc-binding domains are found at residues 124–188, 189–249, and 250–313; these read AMCE…ELLK, PRCS…HYAE, and YCES…EDVH. 4 disordered regions span residues 312–346, 428–455, 602–701, and 766–832; these read VHASDSSDSAFQSARSRESRRSVRMGKSSRSADQC, QQPSEDNRSTEHWMSENIKGKNDLQRNN, ICQE…KERN, and CSSS…CIIS. Composition is skewed to basic and acidic residues over residues 432 to 453 and 603 to 614; these read EDNRSTEHWMSENIKGKNDLQR and CQEKPPPEEKPM. 2 stretches are compositionally biased toward basic residues: residues 669–680 and 816–832; these read RPHHHRRRKSRK and TKSKKKKGHKGKNCIIS. C829 carries the post-translational modification Cysteine methyl ester. C829 is lipidated: S-farnesyl cysteine. A propeptide spans 830 to 832 (removed in mature form); that stretch reads IIS.

It belongs to the prickle / espinas / testin family. As to quaternary structure, interacts with dvl2/dsh and mapk8/jnk1. Expressed in the dorsal marginal zone of early gastrulae (stage 10). As gastrulation proceeds, expression expands to include the lateral and ventral marginal zones, excluding the few rows of cells above the blastopore lip. Expression moves dorsally with gastrulation cell movements, and by the end of gastrulation expression is seen in dorsal mesoderm and posterior but not anterior neural ectoderm. Expression becomes down-regulated in mesoderm but remains strong in posterior ectoderm through the neurula stages. During tailbud stages, expressed in the pronephric duct, tailbud, tailtip and forming somites. In the most posterior regions, expressed in notochord and in the floorplate of the neural tube with weak expression in the roofplate. At stage 30, expressed in a complex pattern in the head including strong expression in the lens and otic vesicle.

It is found in the cell membrane. Acts in a planar cell polarity (PCP) complex; polarization along the apical/basal axis of epithelial cells. Regulates the polarized assembly of fibronectrin on the surface of the mesoderm during gastrulation. Essential for gastrulation cell movements, cooperating with dvl2/dsh to activate jnk. Acts together with tes to control axial elongation. This is Prickle-like protein 1-B (prickle1-b) from Xenopus laevis (African clawed frog).